The primary structure comprises 60 residues: uncharacterized protein (60 aa).

A helical membrane pass occupies residues 27–49 (YYWLVSTARMVLGVTILILILIG).

It localises to the membrane. This is an uncharacterized protein from Archaeoglobus fulgidus (strain ATCC 49558 / DSM 4304 / JCM 9628 / NBRC 100126 / VC-16).